The sequence spans 318 residues: MKNNYLANLIKTLQAIVVSVALLAPLVLPSAVNAFPVYAQQAYENPREATGRIVCANCHLAQKPVEIEVPQGVLPDTVFEAKVEIPYDLSVKQVTGDGTKGPLNVGAVLILPEGFTLAPKDRLTPEMKEKTKGVVISPYSDSKKSIFVVGPIPGAEHQTIIFPILAPNPADNKNVHFIKYPVFVGANRGRGQVNPTGDKSNNTLYSSPVEGRLTKIEKTEKGGYILTIQSKSGDPLTINVPVGPELVVKEGQKVTADQALTVDPNVGGFGQTETEIVLQSPARVKGLIAFFFTVILAQILLVLKKKQFEKVQLAEMNF.

The N-terminal stretch at 1 to 34 (MKNNYLANLIKTLQAIVVSVALLAPLVLPSAVNA) is a signal peptide. Heme contacts are provided by phenylalanine 35, cysteine 55, cysteine 58, and histidine 59. A helical transmembrane segment spans residues 284–304 (VKGLIAFFFTVILAQILLVLK).

It belongs to the cytochrome f family. As to quaternary structure, the 4 large subunits of the cytochrome b6-f complex are cytochrome b6, subunit IV (17 kDa polypeptide, petD), cytochrome f and the Rieske protein, while the 4 small subunits are PetG, PetL, PetM and PetN. The complex functions as a dimer. The cofactor is heme.

It is found in the plastid. The protein localises to the chloroplast thylakoid membrane. Functionally, component of the cytochrome b6-f complex, which mediates electron transfer between photosystem II (PSII) and photosystem I (PSI), cyclic electron flow around PSI, and state transitions. This Rhodomonas salina (Cryptomonas salina) protein is Cytochrome f.